The primary structure comprises 254 residues: Phosphonates import ATP-binding protein PhnC 2 (254 aa).

Positions 4-248 constitute an ABC transporter domain; that stretch reads LEVNNLGKHY…KIESIYGFQQ (245 aa). 37–44 contacts ATP; that stretch reads GPSGAGKS.

This sequence belongs to the ABC transporter superfamily. Phosphonates importer (TC 3.A.1.9.1) family. The complex is composed of two ATP-binding proteins (PhnC), two transmembrane proteins (PhnE) and a solute-binding protein (PhnD).

Its subcellular location is the cell membrane. It catalyses the reaction phosphonate(out) + ATP + H2O = phosphonate(in) + ADP + phosphate + H(+). In terms of biological role, part of the ABC transporter complex PhnCDE involved in phosphonates import. Responsible for energy coupling to the transport system. The chain is Phosphonates import ATP-binding protein PhnC 2 from Oceanobacillus iheyensis (strain DSM 14371 / CIP 107618 / JCM 11309 / KCTC 3954 / HTE831).